A 108-amino-acid polypeptide reads, in one-letter code: Small ribosomal subunit protein uS17 (108 aa).

It belongs to the universal ribosomal protein uS17 family. As to quaternary structure, part of the 30S ribosomal subunit.

In terms of biological role, one of the primary rRNA binding proteins, it binds specifically to the 5'-end of 16S ribosomal RNA. This Methanoculleus marisnigri (strain ATCC 35101 / DSM 1498 / JR1) protein is Small ribosomal subunit protein uS17.